A 184-amino-acid polypeptide reads, in one-letter code: Protein MEH1 (184 aa).

Residue Gly2 is the site of N-myristoyl glycine attachment. 2 S-palmitoyl cysteine lipidation sites follow: Cys7 and Cys8. The stretch at 30–71 forms a coiled coil; it reads QGNANDEYDAEQMRLKEHEHEQKLLAREQELRDIVANTNDKL. The tract at residues 89–147 is disordered; it reads LQEALDKRQQEEGGDSREDERSAGDDNLSGHSVPSSGSAQATTHQTAPRTNTFTLLTSP. Residues 92–112 are compositionally biased toward basic and acidic residues; it reads ALDKRQQEEGGDSREDERSAG. Over residues 117 to 147 the composition is skewed to polar residues; the sequence is SGHSVPSSGSAQATTHQTAPRTNTFTLLTSP. Ser146 and Ser149 each carry phosphoserine.

Component of the GSE complex composed of GTR1, GTR2, SLM4, MEH1 and LTV1. Component of the EGO complex, at least composed of GTR2, SLM4 and MEH1.

Its subcellular location is the vacuole membrane. Its function is as follows. Component of the GSE complex, a GTPase complex required for intracellular sorting of GAP1 out of the endosome. Component of the EGO complex, a complex involved in the regulation of microautophagy. The chain is Protein MEH1 (MEH1) from Saccharomyces cerevisiae (strain ATCC 204508 / S288c) (Baker's yeast).